The sequence spans 337 residues: MSVTLAIDAMGGDHGVVVTVPAACDFLEKHSDVKIILVGDPDLIKQVLDKSPKAPIERIQIIAASEVVLMDDPIEIALRRKKDSSMRVAIVQVKEGAADAVVSSGNTGALMAISRYILKTLDGVDRPAIATAIPNELGLGTTMLDLGANADCEPMHLVQFAQMANVMVQVVDGKPNPSIGLLNIGEEVIKGNEVVKQTSELLRQTNLNFYGNVEGNDIFKGTTDIVVCDGFVGNVVLKASEGLAKMMSGLIRKEFNRSLFTKLMAVCAMVPLLRVRKRVDHRRYNGAVLLGLRGCVIKSHGSADRFAFGFALERAYEASKNHMVERIAAAFVVETTE.

The protein belongs to the PlsX family. Homodimer. Probably interacts with PlsY.

It is found in the cytoplasm. The catalysed reaction is a fatty acyl-[ACP] + phosphate = an acyl phosphate + holo-[ACP]. The protein operates within lipid metabolism; phospholipid metabolism. Its function is as follows. Catalyzes the reversible formation of acyl-phosphate (acyl-PO(4)) from acyl-[acyl-carrier-protein] (acyl-ACP). This enzyme utilizes acyl-ACP as fatty acyl donor, but not acyl-CoA. The chain is Phosphate acyltransferase from Polynucleobacter asymbioticus (strain DSM 18221 / CIP 109841 / QLW-P1DMWA-1) (Polynucleobacter necessarius subsp. asymbioticus).